Consider the following 296-residue polypeptide: Small ribosomal subunit protein uS2 (296 aa).

The segment at 252 to 296 (TSSKTVSKLKQSKKLSKTQNIDEETNTEFDQALGGACENNNSDNT) is disordered.

This sequence belongs to the universal ribosomal protein uS2 family.

This chain is Small ribosomal subunit protein uS2 (rpsB), found in Rickettsia prowazekii (strain Madrid E).